The primary structure comprises 112 residues: Nitrogen regulatory protein GlnK2 (112 aa).

Residues Thr29, 37–39, Val64, and 87–90 each bind ADP; these read GVQ and GDGK. Residues Thr29, 37–39, Val64, and 87–90 each bind ATP; these read GVQ and GDGK.

Belongs to the P(II) protein family. In terms of assembly, homotrimer. Interacts and forms a complex with Amt2.

Its subcellular location is the cytoplasm. In terms of biological role, involved in the regulation of nitrogen metabolism. Regulates the activity of its targets by protein-protein interaction in response to the nitrogen status of the cell. Regulates the activity of the ammonia channel Amt2 via direct interaction. This is Nitrogen regulatory protein GlnK2 from Methanocaldococcus jannaschii (strain ATCC 43067 / DSM 2661 / JAL-1 / JCM 10045 / NBRC 100440) (Methanococcus jannaschii).